The following is a 411-amino-acid chain: Meiotically up-regulated gene 147 protein (411 aa).

Disordered regions lie at residues 1–52 (MLAQ…FENK), 102–137 (EREE…ELAD), and 156–191 (HQHE…HYES). Positions 33–43 (TQNESNLQQSE) are enriched in polar residues. Residues 156–172 (HQHEDEFSSSNKDKGFT) show a composition bias toward basic and acidic residues.

It is found in the cytoplasm. Its subcellular location is the nucleus. Has a role in meiosis. The chain is Meiotically up-regulated gene 147 protein (mug147) from Schizosaccharomyces pombe (strain 972 / ATCC 24843) (Fission yeast).